Reading from the N-terminus, the 145-residue chain is D-aminoacyl-tRNA deacylase (145 aa).

The Gly-cisPro motif, important for rejection of L-amino acids motif lies at 137–138 (GP).

The protein belongs to the DTD family. In terms of assembly, homodimer.

Its subcellular location is the cytoplasm. It catalyses the reaction glycyl-tRNA(Ala) + H2O = tRNA(Ala) + glycine + H(+). It carries out the reaction a D-aminoacyl-tRNA + H2O = a tRNA + a D-alpha-amino acid + H(+). Its function is as follows. An aminoacyl-tRNA editing enzyme that deacylates mischarged D-aminoacyl-tRNAs. Also deacylates mischarged glycyl-tRNA(Ala), protecting cells against glycine mischarging by AlaRS. Acts via tRNA-based rather than protein-based catalysis; rejects L-amino acids rather than detecting D-amino acids in the active site. By recycling D-aminoacyl-tRNA to D-amino acids and free tRNA molecules, this enzyme counteracts the toxicity associated with the formation of D-aminoacyl-tRNA entities in vivo and helps enforce protein L-homochirality. The protein is D-aminoacyl-tRNA deacylase of Shewanella putrefaciens (strain CN-32 / ATCC BAA-453).